Consider the following 424-residue polypeptide: Arogenate dehydratase 3, chloroplastic (424 aa).

The N-terminal 24 residues, 1–24 (MRTLLPSHTPATVTTAARRRHVIH), are a transit peptide targeting the chloroplast. Low complexity predominate over residues 57–71 (EQSESLSSNSNGSSS). Residues 57–77 (EQSESLSSNSNGSSSYHVSAV) form a disordered region. One can recognise a Prephenate dehydratase domain in the interval 122–299 (RVAYQGVPGA…NVTRFVMLAR (178 aa)). Residues 313–404 (SIVFAHEKGT…SFLRVLGSYP (92 aa)) form the ACT domain.

In terms of assembly, may interact with GPA1. In terms of tissue distribution, expressed in roots, leaves, stems, flowers and siliques.

The protein resides in the plastid. Its subcellular location is the chloroplast stroma. The catalysed reaction is L-arogenate + H(+) = L-phenylalanine + CO2 + H2O. The protein operates within amino-acid biosynthesis; L-phenylalanine biosynthesis; L-phenylalanine from L-arogenate: step 1/1. Converts the prephenate produced from the shikimate-chorismate pathway into phenylalanine. Together with GCR1 and GPA1, required for blue light-mediated synthesis of phenylpyruvate and subsequently of phenylalanine (Phe), in etiolated seedlings. The protein is Arogenate dehydratase 3, chloroplastic of Arabidopsis thaliana (Mouse-ear cress).